Consider the following 273-residue polypeptide: Large ribosomal subunit protein uL2 (273 aa).

Disordered regions lie at residues 28-53 and 221-273; these read KPFA…TTRH and RGTA…RRTK. Positions 39–48 are enriched in low complexity; sequence KSGGRNNNGR.

Belongs to the universal ribosomal protein uL2 family. Part of the 50S ribosomal subunit. Forms a bridge to the 30S subunit in the 70S ribosome.

One of the primary rRNA binding proteins. Required for association of the 30S and 50S subunits to form the 70S ribosome, for tRNA binding and peptide bond formation. It has been suggested to have peptidyltransferase activity; this is somewhat controversial. Makes several contacts with the 16S rRNA in the 70S ribosome. The chain is Large ribosomal subunit protein uL2 from Pectobacterium atrosepticum (strain SCRI 1043 / ATCC BAA-672) (Erwinia carotovora subsp. atroseptica).